A 331-amino-acid polypeptide reads, in one-letter code: Malate dehydrogenase (331 aa).

14 to 20 lines the NAD(+) pocket; it reads GAAGSIG. Substrate contacts are provided by Arg95 and Arg101. NAD(+) is bound by residues Asn108, Gln115, and 132–134; that span reads VGN. Substrate-binding residues include Asn134 and Arg165. The Proton acceptor role is filled by His190.

It belongs to the LDH/MDH superfamily. MDH type 2 family.

The catalysed reaction is (S)-malate + NAD(+) = oxaloacetate + NADH + H(+). In terms of biological role, catalyzes the reversible oxidation of malate to oxaloacetate. The sequence is that of Malate dehydrogenase from Rhodococcus opacus (strain B4).